A 129-amino-acid polypeptide reads, in one-letter code: D-ribose pyranase (129 aa).

The active-site Proton donor is His20. Substrate is bound by residues Asp28, His96, and 118 to 120 (YAN).

Belongs to the RbsD / FucU family. RbsD subfamily. In terms of assembly, homodecamer.

The protein resides in the cytoplasm. It carries out the reaction beta-D-ribopyranose = beta-D-ribofuranose. It functions in the pathway carbohydrate metabolism; D-ribose degradation; D-ribose 5-phosphate from beta-D-ribopyranose: step 1/2. Catalyzes the interconversion of beta-pyran and beta-furan forms of D-ribose. The protein is D-ribose pyranase of Exiguobacterium sibiricum (strain DSM 17290 / CCUG 55495 / CIP 109462 / JCM 13490 / 255-15).